The chain runs to 249 residues: Major phosphate-irrepressible acid phosphatase (249 aa).

The first 20 residues, 1 to 20 (MKKNIIAGCLFSLFSLSALA), serve as a signal peptide directing secretion.

This sequence belongs to the class A bacterial acid phosphatase family. Homotetramer.

It is found in the periplasm. It carries out the reaction a phosphate monoester + H2O = an alcohol + phosphate. This Morganella morganii (Proteus morganii) protein is Major phosphate-irrepressible acid phosphatase (phoC).